The chain runs to 554 residues: L-ascorbate oxidase homolog (554 aa).

The N-terminal stretch at 1-21 is a signal peptide; it reads MGSGKVTFVALLLCLSVGVIA. Plastocyanin-like domains are found at residues 22–143 and 196–296; these read EDPY…LNVH and SAKV…AIIR. Residues Asn31, Asn59, and Asn108 are each glycosylated (N-linked (GlcNAc...) asparagine). An intrachain disulfide couples Cys101 to Cys540. Asn332, Asn352, and Asn423 each carry an N-linked (GlcNAc...) asparagine glycan. Positions 411–521 constitute a Plastocyanin-like 3 domain; the sequence is DPSKLTIATN…LGEQLYFSVL (111 aa).

The protein belongs to the multicopper oxidase family. As to expression, pollen.

The protein resides in the secreted. Its subcellular location is the extracellular space. Its function is as follows. Probable oxidoreductase that may be involved in pollen tube growth. The protein is L-ascorbate oxidase homolog of Nicotiana tabacum (Common tobacco).